We begin with the raw amino-acid sequence, 78 residues long: Sec-independent protein translocase protein TatA (78 aa).

The chain crosses the membrane as a helical span at residues 4–21; it reads SFQHILILLVVVLLLFGR. The interval 49–78 is disordered; the sequence is TAKSDSIKTIDNTGKPTNVQANPQRQDSTV. Residues 57–78 are compositionally biased toward polar residues; that stretch reads TIDNTGKPTNVQANPQRQDSTV.

The protein belongs to the TatA/E family. As to quaternary structure, the Tat system comprises two distinct complexes: a TatABC complex, containing multiple copies of TatA, TatB and TatC subunits, and a separate TatA complex, containing only TatA subunits. Substrates initially bind to the TatABC complex, which probably triggers association of the separate TatA complex to form the active translocon.

The protein localises to the cell inner membrane. Part of the twin-arginine translocation (Tat) system that transports large folded proteins containing a characteristic twin-arginine motif in their signal peptide across membranes. TatA could form the protein-conducting channel of the Tat system. This chain is Sec-independent protein translocase protein TatA, found in Afipia carboxidovorans (strain ATCC 49405 / DSM 1227 / KCTC 32145 / OM5) (Oligotropha carboxidovorans).